Consider the following 182-residue polypeptide: UPF0397 protein BCA_2731 (182 aa).

The next 5 membrane-spanning stretches (helical) occupy residues 9–29 (VVAI…GFSI), 40–60 (AILT…IGLI), 71–91 (WGIW…MGLI), 114–134 (ITGL…DIIV), and 142–162 (IVIQ…VLGL).

The protein belongs to the UPF0397 family.

The protein localises to the cell membrane. The chain is UPF0397 protein BCA_2731 from Bacillus cereus (strain 03BB102).